The chain runs to 206 residues: Bis(5'-adenosyl)-triphosphatase (206 aa).

Positions 3 to 115 constitute an HIT domain; that stretch reads KPIYFSKFLV…KINNVGDLIY (113 aa). Positions 96–100 match the Histidine triad motif motif; the sequence is HLHTH. Catalysis depends on His-98, which acts as the Tele-AMP-histidine intermediate. Positions 143–164 are disordered; sequence RQARKNNSTSATVDGDELSQGP.

As to quaternary structure, homodimer. The cofactor is Mn(2+).

It localises to the cytoplasm. The protein resides in the nucleus. Its subcellular location is the mitochondrion. It catalyses the reaction P(1),P(3)-bis(5'-adenosyl) triphosphate + H2O = AMP + ADP + 2 H(+). Its function is as follows. Cleaves A-5'-PPP-5'A to yield AMP and ADP. Can cleave all dinucleoside polyphosphates, provided the phosphate chain contains at least 3 phosphates and that 1 of the 2 bases composing the nucleotide is a purine. Is most effective on dinucleoside triphosphates. Negatively regulates intracellular dinucleoside polyphosphate levels, which elevate following heat shock. The chain is Bis(5'-adenosyl)-triphosphatase (HNT2) from Saccharomyces cerevisiae (strain RM11-1a) (Baker's yeast).